Reading from the N-terminus, the 134-residue chain is Arsenate reductase (134 aa).

Active-site nucleophile residues include Cys-11, Cys-83, and Cys-90. 2 disulfide bridges follow: Cys-11–Cys-83 and Cys-83–Cys-90.

The protein belongs to the low molecular weight phosphotyrosine protein phosphatase family. Thioredoxin-coupled ArsC subfamily.

It localises to the cytoplasm. The enzyme catalyses arsenate + [thioredoxin]-dithiol + H(+) = arsenite + [thioredoxin]-disulfide + H2O. Functionally, catalyzes the reduction of arsenate [As(V)] to arsenite [As(III)]. This is Arsenate reductase from Bacillus cereus (strain G9842).